The primary structure comprises 227 residues: Cytochrome c oxidase subunit 2 (227 aa).

Over 1–14 (MAHRAQVGLQDATS) the chain is Mitochondrial intermembrane. A helical membrane pass occupies residues 15–45 (PIMEELVIFHDHALMIIFLICFLVLYALFLT). The Mitochondrial matrix segment spans residues 46 to 59 (LTTKLTNTNISDAQ). A helical membrane pass occupies residues 60–87 (EMETIWTTLPAIILILIALPSLRILYLT). Residues 88–227 (DEINDPSFTI…IFEMGPVFAL (140 aa)) are Mitochondrial intermembrane-facing. His-161, Cys-196, Glu-198, Cys-200, His-204, and Met-207 together coordinate Cu cation. Glu-198 is a binding site for Mg(2+).

This sequence belongs to the cytochrome c oxidase subunit 2 family. As to quaternary structure, component of the cytochrome c oxidase (complex IV, CIV), a multisubunit enzyme composed of 14 subunits. The complex is composed of a catalytic core of 3 subunits MT-CO1, MT-CO2 and MT-CO3, encoded in the mitochondrial DNA, and 11 supernumerary subunits COX4I, COX5A, COX5B, COX6A, COX6B, COX6C, COX7A, COX7B, COX7C, COX8 and NDUFA4, which are encoded in the nuclear genome. The complex exists as a monomer or a dimer and forms supercomplexes (SCs) in the inner mitochondrial membrane with NADH-ubiquinone oxidoreductase (complex I, CI) and ubiquinol-cytochrome c oxidoreductase (cytochrome b-c1 complex, complex III, CIII), resulting in different assemblies (supercomplex SCI(1)III(2)IV(1) and megacomplex MCI(2)III(2)IV(2)). Found in a complex with TMEM177, COA6, COX18, COX20, SCO1 and SCO2. Interacts with TMEM177 in a COX20-dependent manner. Interacts with COX20. Interacts with COX16. Requires Cu cation as cofactor.

The protein localises to the mitochondrion inner membrane. It carries out the reaction 4 Fe(II)-[cytochrome c] + O2 + 8 H(+)(in) = 4 Fe(III)-[cytochrome c] + 2 H2O + 4 H(+)(out). In terms of biological role, component of the cytochrome c oxidase, the last enzyme in the mitochondrial electron transport chain which drives oxidative phosphorylation. The respiratory chain contains 3 multisubunit complexes succinate dehydrogenase (complex II, CII), ubiquinol-cytochrome c oxidoreductase (cytochrome b-c1 complex, complex III, CIII) and cytochrome c oxidase (complex IV, CIV), that cooperate to transfer electrons derived from NADH and succinate to molecular oxygen, creating an electrochemical gradient over the inner membrane that drives transmembrane transport and the ATP synthase. Cytochrome c oxidase is the component of the respiratory chain that catalyzes the reduction of oxygen to water. Electrons originating from reduced cytochrome c in the intermembrane space (IMS) are transferred via the dinuclear copper A center (CU(A)) of subunit 2 and heme A of subunit 1 to the active site in subunit 1, a binuclear center (BNC) formed by heme A3 and copper B (CU(B)). The BNC reduces molecular oxygen to 2 water molecules using 4 electrons from cytochrome c in the IMS and 4 protons from the mitochondrial matrix. This Pongo pygmaeus (Bornean orangutan) protein is Cytochrome c oxidase subunit 2 (MT-CO2).